Here is a 395-residue protein sequence, read N- to C-terminus: S-adenosylmethionine synthase (395 aa).

Histidine 15 is a binding site for ATP. A Mg(2+)-binding site is contributed by aspartate 17. Residue glutamate 43 participates in K(+) binding. Glutamine 99 provides a ligand contact to L-methionine. The flexible loop stretch occupies residues 99–109 (QSPDIAMGVNE). Residues 174-176 (DGK), 240-241 (RF), aspartate 249, 255-256 (RK), alanine 272, and lysine 276 each bind ATP. L-methionine is bound at residue aspartate 249. Lysine 280 contacts L-methionine.

Belongs to the AdoMet synthase family. Homotetramer; dimer of dimers. Requires Mg(2+) as cofactor. K(+) is required as a cofactor.

The protein localises to the cytoplasm. It carries out the reaction L-methionine + ATP + H2O = S-adenosyl-L-methionine + phosphate + diphosphate. It participates in amino-acid biosynthesis; S-adenosyl-L-methionine biosynthesis; S-adenosyl-L-methionine from L-methionine: step 1/1. Catalyzes the formation of S-adenosylmethionine (AdoMet) from methionine and ATP. The overall synthetic reaction is composed of two sequential steps, AdoMet formation and the subsequent tripolyphosphate hydrolysis which occurs prior to release of AdoMet from the enzyme. The chain is S-adenosylmethionine synthase from Moorella thermoacetica (strain ATCC 39073 / JCM 9320).